The chain runs to 140 residues: L-fucose mutarotase (140 aa).

His22 acts as the Proton donor in catalysis. Residues Asp30, Arg107, and 129–131 (YGN) each bind substrate.

This sequence belongs to the RbsD / FucU family. FucU mutarotase subfamily. Homodecamer.

The protein resides in the cytoplasm. The enzyme catalyses alpha-L-fucose = beta-L-fucose. It functions in the pathway carbohydrate metabolism; L-fucose metabolism. Functionally, involved in the anomeric conversion of L-fucose. This Citrobacter koseri (strain ATCC BAA-895 / CDC 4225-83 / SGSC4696) protein is L-fucose mutarotase.